Here is a 1065-residue protein sequence, read N- to C-terminus: Cellulose synthase A catalytic subunit 3 [UDP-forming] (1065 aa).

The Cytoplasmic portion of the chain corresponds to 1–260 (MESEGETAGK…PSSRINPYRM (260 aa)). S3 bears the Phosphoserine mark. Residues C20, C23, C39, C42, C47, C50, C62, and C65 each coordinate Zn(2+). The segment at 20-66 (CQICSDNVGKTVDGDRFVACDICSFPVCRPCYEYERKDGNQSCPQCK) adopts an RING-type; degenerate zinc-finger fold. S151, S211, and S216 each carry phosphoserine. A helical membrane pass occupies residues 261–281 (VIMLRLVILCLFLHYRITNPV). At 282-283 (PN) the chain is on the extracellular side. A helical transmembrane segment spans residues 284-304 (AFALWLVSVICEIWFALSWIL). Residues 305-842 (DQFPKWFPVN…LERFAYVNTT (538 aa)) lie on the Cytoplasmic side of the membrane. The UDP-alpha-D-glucose site is built by S343, K349, E350, and D379. D379 is a catalytic residue. Residues 433–457 (VKDRRAMKREYEEFKIRINALVSKA) adopt a coiled-coil conformation. K520 contributes to the UDP-alpha-D-glucose binding site. The Mn(2+) site is built by K521 and D545. The segment at 643–672 (SKLCGGSRKKNSKAKKESDKKKSGRHTDST) is disordered. A compositionally biased stretch (basic and acidic residues) spans 656-670 (AKKESDKKKSGRHTD). D765 is an active-site residue. Residues 843–863 (IYPITSIPLLMYCTLPAVCLF) traverse the membrane as a helical segment. Residues 864–874 (TNQFIIPQISN) lie on the Extracellular side of the membrane. A helical membrane pass occupies residues 875–895 (IASIWFLSLFLSIFATGILEM). At 896-910 (RWSGVGIDEWWRNEQ) the chain is on the cytoplasmic side. The helical transmembrane segment at 911 to 931 (FWVIGGVSAHLFAVFQGILKV) threads the bilayer. The Extracellular segment spans residues 932–961 (LAGIDTNFTVTSKASDEDGDFAELYLFKWT). N938 carries N-linked (GlcNAc...) asparagine glycosylation. A helical transmembrane segment spans residues 962–982 (TLLIPPTTLLIVNLVGVVAGV). The Cytoplasmic segment spans residues 983-993 (SYAINSGYQSW). A helical transmembrane segment spans residues 994–1014 (GPLFGKLFFAFWVIVHLYPFL). The Extracellular portion of the chain corresponds to 1015 to 1023 (KGLMGRQNR). A helical transmembrane segment spans residues 1024-1044 (TPTIVVVWSVLLASIFSLLWV). Residues 1045–1065 (RIDPFTSRVTGPDILECGINC) lie on the Cytoplasmic side of the membrane.

Belongs to the glycosyltransferase 2 family. Plant cellulose synthase subfamily. In terms of assembly, homodimer. Interacts with CESA1 and CESA6. Interacts with STL1 and STL2, but not with GOT1. Binds to CSI1 and CSI3. Interacts with PAT24/TIP1. Zn(2+) serves as cofactor. It depends on Mn(2+) as a cofactor. Post-translationally, palmitoylated, in part by PAT24/TIP1. Expressed in young plants, flowers and roots, and to a lower extent in leaves and stems. Localized in all cells except meristematic cells. Accumulates particularly in root caps, root hairs, epidermal layer, midveins of leaves and anthers. Not present in old tissues.

Its subcellular location is the cell membrane. It is found in the golgi apparatus membrane. It catalyses the reaction [(1-&gt;4)-beta-D-glucosyl](n) + UDP-alpha-D-glucose = [(1-&gt;4)-beta-D-glucosyl](n+1) + UDP + H(+). The protein operates within glycan metabolism; plant cellulose biosynthesis. Its function is as follows. Catalytic subunit of cellulose synthase terminal complexes ('rosettes'), required for beta-1,4-glucan microfibril crystallization, a major mechanism of the cell wall formation. Involved in the primary cell wall formation, especially in roots. The chain is Cellulose synthase A catalytic subunit 3 [UDP-forming] from Arabidopsis thaliana (Mouse-ear cress).